Consider the following 309-residue polypeptide: High-affinity zinc uptake system protein AztC (309 aa).

The first 24 residues, 1–24 (MKDWLFRIATCSIMTFSSLAAAQA), serve as a signal peptide directing secretion. A Zn(2+)-binding site is contributed by H61. Residues 117–132 (GGGHYHYIDGKAVFHA) are D-loop. H138 is a binding site for Zn(2+). C158 and C165 are joined by a disulfide. H204 lines the Zn(2+) pocket. A Z-loop region spans residues 222–229 (QGVSTESE). Residue D279 coordinates Zn(2+).

The protein belongs to the bacterial solute-binding protein 9 family. As to quaternary structure, monomer.

It localises to the periplasm. Functionally, part of the ATP-binding cassette (ABC) transport system AztABCD involved in zinc import. Binds zinc with high affinity and specificity and delivers it to the membrane permease for translocation into the cytoplasm. This chain is High-affinity zinc uptake system protein AztC, found in Paracoccus denitrificans (strain Pd 1222).